Consider the following 431-residue polypeptide: Histidinol dehydrogenase (431 aa).

3 residues coordinate NAD(+): tyrosine 130, glutamine 192, and asparagine 215. Positions 238, 260, and 263 each coordinate substrate. 2 residues coordinate Zn(2+): glutamine 260 and histidine 263. Residues glutamate 328 and histidine 329 each act as proton acceptor in the active site. Substrate is bound by residues histidine 329, aspartate 362, glutamate 416, and histidine 421. Aspartate 362 contributes to the Zn(2+) binding site. Position 421 (histidine 421) interacts with Zn(2+).

This sequence belongs to the histidinol dehydrogenase family. It depends on Zn(2+) as a cofactor.

It carries out the reaction L-histidinol + 2 NAD(+) + H2O = L-histidine + 2 NADH + 3 H(+). It participates in amino-acid biosynthesis; L-histidine biosynthesis; L-histidine from 5-phospho-alpha-D-ribose 1-diphosphate: step 9/9. In terms of biological role, catalyzes the sequential NAD-dependent oxidations of L-histidinol to L-histidinaldehyde and then to L-histidine. The protein is Histidinol dehydrogenase of Thermosynechococcus vestitus (strain NIES-2133 / IAM M-273 / BP-1).